A 539-amino-acid chain; its full sequence is Eukaryotic translation initiation factor 3 subunit L (539 aa).

The 209-residue stretch at 306–514 (TFSDILLYVQ…IHIADTKVSH (209 aa)) folds into the PCI domain.

It belongs to the eIF-3 subunit L family. As to quaternary structure, component of the eukaryotic translation initiation factor 3 (eIF-3) complex. The eIF-3 complex interacts with pix.

The protein localises to the cytoplasm. Its function is as follows. Component of the eukaryotic translation initiation factor 3 (eIF-3) complex, which is involved in protein synthesis of a specialized repertoire of mRNAs and, together with other initiation factors, stimulates binding of mRNA and methionyl-tRNAi to the 40S ribosome. The eIF-3 complex specifically targets and initiates translation of a subset of mRNAs involved in cell proliferation. The polypeptide is Eukaryotic translation initiation factor 3 subunit L (Drosophila willistoni (Fruit fly)).